We begin with the raw amino-acid sequence, 708 residues long: Potassium-transporting ATPase ATP-binding subunit 2 (708 aa).

The segment at 1-23 is disordered; it reads MRSPSRLPHETRDSRQRTPKTDM. The segment covering 7 to 23 has biased composition (basic and acidic residues); it reads LPHETRDSRQRTPKTDM. 4 helical membrane passes run 49 to 69, 84 to 104, 235 to 255, and 283 to 303; these read MFIVWVGTIVTFLVTLNPNLF, GLITLILFFTVLFANFAEAVA, IALTVLLAVLTQVFLIVVATM, and SIAILISLLVALIPTTIGGLL. Catalysis depends on D339, which acts as the 4-aspartylphosphate intermediate. ATP contacts are provided by residues D376, E380, 407-414, and K426; that span reads FSAKTRMS. Mg(2+)-binding residues include D549 and D553. The next 3 membrane-spanning stretches (helical) occupy residues 619–639, 645–665, and 683–703; these read FAILPTIFGAAGIGALNIMGL, AIISALIYNALIIPALIPLAL, and IFIYGLGGIIAPFIAIKLIDV.

It belongs to the cation transport ATPase (P-type) (TC 3.A.3) family. Type IA subfamily. As to quaternary structure, the system is composed of three essential subunits: KdpA, KdpB and KdpC.

The protein localises to the cell inner membrane. It carries out the reaction K(+)(out) + ATP + H2O = K(+)(in) + ADP + phosphate + H(+). In terms of biological role, part of the high-affinity ATP-driven potassium transport (or Kdp) system, which catalyzes the hydrolysis of ATP coupled with the electrogenic transport of potassium into the cytoplasm. This subunit is responsible for energy coupling to the transport system and for the release of the potassium ions to the cytoplasm. This is Potassium-transporting ATPase ATP-binding subunit 2 from Nostoc sp. (strain PCC 7120 / SAG 25.82 / UTEX 2576).